Here is an 81-residue protein sequence, read N- to C-terminus: MNPLISSASVIAAGLAVGLASIGPGVGQGTAAGQAVEGIARQPEAEGKIRGTLLLSLAFMEALTIYGLVVALALLFANPFV.

2 helical membrane passes run Pro3–Gly23 and Leu57–Ala77.

This sequence belongs to the ATPase C chain family. F-type ATPases have 2 components, F(1) - the catalytic core - and F(0) - the membrane proton channel. F(1) has five subunits: alpha(3), beta(3), gamma(1), delta(1), epsilon(1). F(0) has four main subunits: a(1), b(1), b'(1) and c(10-14). The alpha and beta chains form an alternating ring which encloses part of the gamma chain. F(1) is attached to F(0) by a central stalk formed by the gamma and epsilon chains, while a peripheral stalk is formed by the delta, b and b' chains.

It is found in the plastid. The protein resides in the chloroplast thylakoid membrane. Its function is as follows. F(1)F(0) ATP synthase produces ATP from ADP in the presence of a proton or sodium gradient. F-type ATPases consist of two structural domains, F(1) containing the extramembraneous catalytic core and F(0) containing the membrane proton channel, linked together by a central stalk and a peripheral stalk. During catalysis, ATP synthesis in the catalytic domain of F(1) is coupled via a rotary mechanism of the central stalk subunits to proton translocation. In terms of biological role, key component of the F(0) channel; it plays a direct role in translocation across the membrane. A homomeric c-ring of between 10-14 subunits forms the central stalk rotor element with the F(1) delta and epsilon subunits. In Ceratophyllum demersum (Rigid hornwort), this protein is ATP synthase subunit c, chloroplastic.